Here is a 172-residue protein sequence, read N- to C-terminus: L-methionine sulfoximine/L-methionine sulfone acetyltransferase (172 aa).

An N-acetyltransferase domain is found at Ala3–Asp166. Residues Arg75–Phe77 and Glu85–Ser87 each bind substrate. Acetyl-CoA-binding positions include Val88 to Val90, Gly96 to Val101, and Asn127.

In terms of assembly, homodimer.

It carries out the reaction L-methionine sulfoximine + acetyl-CoA = N-acetyl-L-methionine sulfoximine + CoA + H(+). The enzyme catalyses L-methionine sulfone + acetyl-CoA = N-acetyl-L-methionine sulfone + CoA + H(+). In terms of biological role, plays a role in the resistance against the toxic effects of L-methionine sulfoximine (MSX), a rare amino acid, which inhibits glutamine synthetase (GlnA). Catalyzes the acetylation of L-methionine sulfoximine (MSX). It can also use L-methionine sulfone (MSO). The polypeptide is L-methionine sulfoximine/L-methionine sulfone acetyltransferase (Pseudomonas paraeruginosa (strain DSM 24068 / PA7) (Pseudomonas aeruginosa (strain PA7))).